The primary structure comprises 256 residues: MKHSNKPYDSFQDELEDYIKVQKARGLEPKTCFRRMRGEYLESCGYREEFDSRPRYRMFDQRIPSGTNHSYPRSCSSSQTEDRVPQWLPAHDKIRLNSLNYCQFTRDGFSEKPVSLNLSQQEYNCGSYSVESVVHKDLCSGHSTIDPQVSHRQMYQKRKRHLEEGRERQEERPKHERKRSSEEMDLNKHKSIQRKKTKAETETVQDGTEKLKNRKEKKNRDVSSKKEDRKRRKEKKEQGEERTEEEMLWDQSILGF.

Disordered regions lie at residues Q61–R83 and G141–F256. Polar residues-rich tracts occupy residues P64–Q79 and G141–Q153. 2 stretches are compositionally biased toward basic and acidic residues: residues H161 to K188 and K218 to E227. The stretch at T208 to M247 forms a coiled coil.

This is Lysine-rich coiled-coil protein 1 (Krcc1) from Rattus norvegicus (Rat).